Here is a 385-residue protein sequence, read N- to C-terminus: Lipoyl synthase, mitochondrial (385 aa).

Cysteine 107, cysteine 112, cysteine 118, cysteine 137, cysteine 141, cysteine 144, and serine 352 together coordinate [4Fe-4S] cluster. One can recognise a Radical SAM core domain in the interval 122–341 (KKSEATATIM…RDTALKMGFL (220 aa)).

It belongs to the radical SAM superfamily. Lipoyl synthase family. [4Fe-4S] cluster serves as cofactor.

The protein localises to the mitochondrion. It catalyses the reaction [[Fe-S] cluster scaffold protein carrying a second [4Fe-4S](2+) cluster] + N(6)-octanoyl-L-lysyl-[protein] + 2 oxidized [2Fe-2S]-[ferredoxin] + 2 S-adenosyl-L-methionine + 4 H(+) = [[Fe-S] cluster scaffold protein] + N(6)-[(R)-dihydrolipoyl]-L-lysyl-[protein] + 4 Fe(3+) + 2 hydrogen sulfide + 2 5'-deoxyadenosine + 2 L-methionine + 2 reduced [2Fe-2S]-[ferredoxin]. It functions in the pathway protein modification; protein lipoylation via endogenous pathway; protein N(6)-(lipoyl)lysine from octanoyl-[acyl-carrier-protein]: step 2/2. Functionally, catalyzes the radical-mediated insertion of two sulfur atoms into the C-6 and C-8 positions of the octanoyl moiety bound to the lipoyl domains of lipoate-dependent enzymes, thereby converting the octanoylated domains into lipoylated derivatives. The polypeptide is Lipoyl synthase, mitochondrial (Meyerozyma guilliermondii (strain ATCC 6260 / CBS 566 / DSM 6381 / JCM 1539 / NBRC 10279 / NRRL Y-324) (Yeast)).